The primary structure comprises 323 residues: Elongation factor P--(R)-beta-lysine ligase (323 aa).

76 to 78 (SPE) serves as a coordination point for substrate. Residues 100–102 (RNE) and asparagine 109 each bind ATP. Tyrosine 118 is a binding site for substrate. 242–243 (EL) lines the ATP pocket. Glutamate 249 is a substrate binding site. An ATP-binding site is contributed by glycine 298.

It belongs to the class-II aminoacyl-tRNA synthetase family. EpmA subfamily. As to quaternary structure, homodimer.

It catalyses the reaction D-beta-lysine + L-lysyl-[protein] + ATP = N(6)-((3R)-3,6-diaminohexanoyl)-L-lysyl-[protein] + AMP + diphosphate + H(+). Functionally, with EpmB is involved in the beta-lysylation step of the post-translational modification of translation elongation factor P (EF-P). Catalyzes the ATP-dependent activation of (R)-beta-lysine produced by EpmB, forming a lysyl-adenylate, from which the beta-lysyl moiety is then transferred to the epsilon-amino group of a conserved specific lysine residue in EF-P. The sequence is that of Elongation factor P--(R)-beta-lysine ligase from Actinobacillus succinogenes (strain ATCC 55618 / DSM 22257 / CCUG 43843 / 130Z).